Consider the following 156-residue polypeptide: Ribosome maturation factor RimP (156 aa).

Belongs to the RimP family.

Its subcellular location is the cytoplasm. Functionally, required for maturation of 30S ribosomal subunits. This is Ribosome maturation factor RimP from Dictyoglomus thermophilum (strain ATCC 35947 / DSM 3960 / H-6-12).